We begin with the raw amino-acid sequence, 515 residues long: Cytochrome P450 monooxygenase mfmA (515 aa).

The helical transmembrane segment at 3 to 23 (KISIIPIVGVALSLAIILQLG) threads the bilayer. Cys-453 is a binding site for heme.

It belongs to the cytochrome P450 family. Heme is required as a cofactor.

It localises to the membrane. The protein operates within secondary metabolite biosynthesis; terpenoid biosynthesis. In terms of biological role, cytochrome P450 monooxygenase; part of the gene cluster that mediates the biosynthesis of the phthalide-terpenoid hybrid 11'-O-desmethylfendlerol. Within the pathway, mfma and mfmC act together to convert 3,5-dimethylorsellinic acid (DMOA) into the phthalide 5,7-dihydroxy-4-(hydroxymethyl)-6-methylphthalide. MfmA performs especially an hydroxylation at C-9. The biosynthesis of 11'-O-desmethylfendlerol begins with the NR-PKS mfmB that forms 3,5-dimethylorsellinic acid (DMOA), which is then transformed into the phthalide 5,7-dihydroxy-4-(hydroxymethyl)-6-methylphthalide by the cytochrome P450 monooxygenase mfmA and the hydrolase mfmC. Subsequently, the methyltransferase mfmE catalyzes 7-O-methylation to yield 5-hydroxy-4-(hydroxymethyl)-7-methoxy-6-methylphthalide, which undergoes C-3 hydroxylation by the cytochrome P450 monooxygenase mfmF. The resultant cyclopolic acid (2,5-dihydroxy-4-(hydroxymethyl)-7-methoxy-6-methylphthalide) is then farnesylated by the DMATS-type prenyltransferase mfmD to afford 5-O-farnesylcyclopolic acid. Finally, the Pyr4-family terpene cyclase mfmH cyclizes the farnesyl moiety of 5-O-farnesylcyclopolic acid into a drimane-like structure, thus completing the biosynthesis of 11'-O-desmethylfendlerol. In Annulohypoxylon moriforme (Filamentous fungus), this protein is Cytochrome P450 monooxygenase mfmA.